The following is a 911-amino-acid chain: Gem-associated protein 4a (911 aa).

As to quaternary structure, component of the core survival motor neuron (SMN) complex composed of Smn, Gem2, Gem3, rig/Gem5 and one of 3 almost identical Gem4 paralogs encoded by Glos/Gem4a, Gem4b or Gem4c. Interacts with Smn; the interaction is probably indirect.

Component of the survival motor neuron (SMN) complex that catalyzes the assembly of small nuclear ribonucleoproteins (snRNPs), the building blocks of the spliceosome, and thereby plays an important role in the splicing of cellular pre-mRNAs. One of 3 almost identical paralogs (Glos/Gem4a, Gem4b and Gem4c), resulting from a genomic triplication, that have some redundant function. Required for neuromuscular function and organismal viability. The protein is Gem-associated protein 4a of Drosophila melanogaster (Fruit fly).